Consider the following 273-residue polypeptide: Putative phosphoenolpyruvate synthase regulatory protein (273 aa).

Position 154–161 (154–161 (GVSRSGKT)) interacts with ADP.

The protein belongs to the pyruvate, phosphate/water dikinase regulatory protein family. PSRP subfamily.

The catalysed reaction is [pyruvate, water dikinase] + ADP = [pyruvate, water dikinase]-phosphate + AMP + H(+). It carries out the reaction [pyruvate, water dikinase]-phosphate + phosphate + H(+) = [pyruvate, water dikinase] + diphosphate. In terms of biological role, bifunctional serine/threonine kinase and phosphorylase involved in the regulation of the phosphoenolpyruvate synthase (PEPS) by catalyzing its phosphorylation/dephosphorylation. This is Putative phosphoenolpyruvate synthase regulatory protein from Neisseria meningitidis serogroup B (strain ATCC BAA-335 / MC58).